Reading from the N-terminus, the 349-residue chain is uncharacterized protein (349 aa).

Residues 51-160 enclose the THUMP domain; the sequence is NIIKENKNNL…QDESYISIFQ (110 aa).

This is an uncharacterized protein from Methanocaldococcus jannaschii (strain ATCC 43067 / DSM 2661 / JAL-1 / JCM 10045 / NBRC 100440) (Methanococcus jannaschii).